Reading from the N-terminus, the 542-residue chain is Protein OS-9 homolog (542 aa).

The first 21 residues, 1-21, serve as a signal peptide directing secretion; it reads MQAKIIYALSAISALIPLGSS. N52 and N74 each carry an N-linked (GlcNAc...) asparagine glycan. 4 cysteine pairs are disulfide-bonded: C70–C258, C117–C130, C193–C227, and C208–C239. Positions 115 to 241 constitute an MRH domain; sequence ERCIFYQAGF…QVTIPELCNL (127 aa). 6 residues coordinate a mannooligosaccharide derivative: W125, Q137, D194, R200, E223, and Y229. An N-linked (GlcNAc...) asparagine glycan is attached at N380. The interval 497–528 is disordered; sequence NARMDDDESTSHTTRDIGEAGSQTTGNTESEV. Residues 505-514 are compositionally biased toward basic and acidic residues; the sequence is STSHTTRDIG. The segment covering 517–528 has biased composition (polar residues); the sequence is GSQTTGNTESEV. Residues 539-542 carry the Prevents secretion from ER motif; the sequence is HDEL.

This sequence belongs to the OS-9 family. In terms of assembly, homodimer. Component of the HRD1 ubiquitin ligase complex which contains the E3 ligase HRD1, its cofactors HRD3, USA1 and DER1, substrate recruiting factor YOS9 and CDC48-binding protein UBX2. Within the complex, interacts (via N-terminus) with HRD3. In ERAD-L, HRD3 and YOS9 jointly bind misfolded glycoproteins in the endoplasmic reticulum (ER) lumen. Movement of ERAD-L substrates through the ER membrane is facilitated by HRD1 and DER1 which have lateral gates facing each other and which distort the membrane region between the lateral gates, making it much thinner than a normal phospholipid bilayer. Substrates insert into the membrane as a hairpin loop with one strand interacting with DER1 and the other with HRD1. The HRD1 complex interacts with the heterotrimeric CDC48-NPL4-UFD1 ATPase complex which is recruited by UBX2 via its interaction with CDC48 and which moves ubiquitinated substrates to the cytosol for targeting to the proteasome. Interacts with KAR2 and EMP47. Interacts with misfolded ER lumenal proteins like PCR1. Interacts with the GPI-anchored proteins GAS1 and MKC7.

The protein localises to the endoplasmic reticulum membrane. Its function is as follows. Lectin involved in the quality control of the secretory pathway. As a member of the endoplasmic reticulum-associated degradation lumenal (ERAD-L) surveillance system, targets misfolded endoplasmic reticulum lumenal glycoproteins for degradation. The recognition of targets is N-glycan specific. Functions in recruiting misfolded protein substrates in conjunction with HRD3. This Saccharomyces cerevisiae (strain ATCC 204508 / S288c) (Baker's yeast) protein is Protein OS-9 homolog (YOS9).